The primary structure comprises 378 residues: Probable dihydroorotase-like protein (378 aa).

Belongs to the metallo-dependent hydrolases superfamily. DHOase family. PyrC' subfamily.

In terms of biological role, non-functional DHOase. The protein is Probable dihydroorotase-like protein (pyrC') of Helicobacter pylori (strain ATCC 700392 / 26695) (Campylobacter pylori).